Here is a 252-residue protein sequence, read N- to C-terminus: Tumor necrosis factor ligand superfamily member 15 (252 aa).

Over 1–39 (MAEELGLGFGEAVPVEMLPEGCRHRREARTGLAARSKAC) the chain is Cytoplasmic. Residues 40–60 (LALTCCLLSFPILAGLSTLLM) form a helical; Signal-anchor for type II membrane protein membrane-spanning segment. Residues 61-252 (TGQLRIPGKD…DKTFFGAFLI (192 aa)) lie on the Extracellular side of the membrane. The region spanning 96–252 (PKAHLTIMRQ…DKTFFGAFLI (157 aa)) is the THD domain. A glycan (N-linked (GlcNAc...) asparagine) is linked at N134. C163 and C203 form a disulfide bridge. An N-linked (GlcNAc...) asparagine glycan is attached at N230.

Belongs to the tumor necrosis factor family. In terms of assembly, homotrimer.

It localises to the membrane. Functionally, receptor for TNFRSF25 and TNFRSF6B. Mediates activation of NF-kappa-B. Inhibits vascular endothelial growth and angiogenesis (in vitro). Promotes activation of caspases and apoptosis. Promotes splenocyte alloactivation. This is Tumor necrosis factor ligand superfamily member 15 (Tnfsf15) from Rattus norvegicus (Rat).